Here is a 327-residue protein sequence, read N- to C-terminus: Type II methyltransferase M.HhaI (327 aa).

Residues 12 to 325 (LRFIDLFAGL…YNIGSSLNFK (314 aa)) form the SAM-dependent MTase C5-type domain. C81 is an active-site residue.

This sequence belongs to the class I-like SAM-binding methyltransferase superfamily. C5-methyltransferase family. As to quaternary structure, monomer.

The enzyme catalyses a 2'-deoxycytidine in DNA + S-adenosyl-L-methionine = a 5-methyl-2'-deoxycytidine in DNA + S-adenosyl-L-homocysteine + H(+). In terms of biological role, a methylase, recognizes the double-stranded sequence 5'-GCGC-3', methylates C-2 on both strands, and protects the DNA from cleavage by the HhaI endonuclease. This chain is Type II methyltransferase M.HhaI (hhaIM), found in Haemophilus parahaemolyticus.